Reading from the N-terminus, the 428-residue chain is Nematode resistance protein-like HSPRO1 (428 aa).

Interacts with SNF4.

Its subcellular location is the cytoplasm. Its function is as follows. Positive regulator of basal resistance. This Arabidopsis thaliana (Mouse-ear cress) protein is Nematode resistance protein-like HSPRO1 (HSPRO1).